We begin with the raw amino-acid sequence, 154 residues long: Mating pheromone 2 (154 aa).

The N-terminal stretch at 1–16 is a signal peptide; it reads MKAIFIILAILMVTQA. Positions 17–52 are excised as a propeptide; it reads FKMTSKVNTKLQSQIQSKFQSKNKLASTFQTSSQLK.

The protein localises to the secreted. Functionally, mating ciliate pheromones (or gamones) are diffusible extracellular communication signals that distinguish different intraspecific classes of cells commonly referred to as 'mating types'. They prepare the latter for conjugation by changing their cell surface properties. The sequence is that of Mating pheromone 2 from Euplotoides octocarinatus (Freshwater ciliate).